Consider the following 393-residue polypeptide: 4-hydroxyphenylpyruvate dioxygenase (393 aa).

An N-acetylthreonine modification is found at Thr2. 2 VOC domains span residues 18-149 (HFHS…LVEK) and 180-338 (MIDH…IFTK). Lys132 is modified (N6-succinyllysine). Residue His183 participates in Fe cation binding. Residues Ser211, Ser226, and Ser250 each carry the phosphoserine modification. 2 residues coordinate Fe cation: His266 and Glu349.

It belongs to the 4HPPD family. In terms of assembly, homodimer. The cofactor is Fe cation.

It is found in the cytoplasm. It localises to the endoplasmic reticulum membrane. The protein localises to the golgi apparatus membrane. The enzyme catalyses 3-(4-hydroxyphenyl)pyruvate + O2 = homogentisate + CO2. The protein operates within amino-acid degradation; L-phenylalanine degradation; acetoacetate and fumarate from L-phenylalanine: step 3/6. Catalyzes the conversion of 4-hydroxyphenylpyruvic acid to homogentisic acid, one of the steps in tyrosine catabolism. The sequence is that of 4-hydroxyphenylpyruvate dioxygenase (HPD) from Homo sapiens (Human).